A 477-amino-acid chain; its full sequence is Methylenetetrahydrofolate--tRNA-(uracil-5-)-methyltransferase TrmFO (477 aa).

Residue G15–G20 participates in FAD binding.

The protein belongs to the MnmG family. TrmFO subfamily. It depends on FAD as a cofactor.

The protein resides in the cytoplasm. The catalysed reaction is uridine(54) in tRNA + (6R)-5,10-methylene-5,6,7,8-tetrahydrofolate + NADH + H(+) = 5-methyluridine(54) in tRNA + (6S)-5,6,7,8-tetrahydrofolate + NAD(+). The enzyme catalyses uridine(54) in tRNA + (6R)-5,10-methylene-5,6,7,8-tetrahydrofolate + NADPH + H(+) = 5-methyluridine(54) in tRNA + (6S)-5,6,7,8-tetrahydrofolate + NADP(+). In terms of biological role, catalyzes the folate-dependent formation of 5-methyl-uridine at position 54 (M-5-U54) in all tRNAs. The protein is Methylenetetrahydrofolate--tRNA-(uracil-5-)-methyltransferase TrmFO of Nitrobacter hamburgensis (strain DSM 10229 / NCIMB 13809 / X14).